Consider the following 522-residue polypeptide: Aspartic and glutamic acid-rich protein (522 aa).

The first 16 residues, Met-1 to Ala-16, serve as a signal peptide directing secretion. 2 stretches are compositionally biased toward basic and acidic residues: residues Tyr-72–Ser-81 and Ser-93–Ala-102. The segment at Tyr-72–Ile-497 is disordered. The segment covering Asp-109–Asp-125 has biased composition (acidic residues). Basic and acidic residues predominate over residues Lys-142 to Asp-152. Composition is skewed to acidic residues over residues Met-153–Lys-166, Phe-173–Val-200, Asp-228–Asp-261, and Glu-267–Gly-283. Residues Ser-284 to Glu-343 are compositionally biased toward basic and acidic residues. Positions Asp-319–Glu-465 form a coiled coil. The span at Asp-358 to Ala-374 shows a compositional bias: acidic residues. 3 stretches are compositionally biased toward basic and acidic residues: residues Glu-375–Lys-397, Asp-407–Lys-453, and Leu-461–Asp-491.

In terms of tissue distribution, component of the acid-soluble organic matrix of the aragonitic skeleton (at protein level).

It is found in the secreted. This is Aspartic and glutamic acid-rich protein from Acropora millepora (Staghorn coral).